We begin with the raw amino-acid sequence, 533 residues long: Nitrogen fixation protein AnfA (533 aa).

The segment at 33–193 (ILYKISQIIT…PLVELYLIEN (161 aa)) is a domain. The region spanning 46–186 (DLADALSIVL…MIATMIAPLV (141 aa)) is the GAF domain. In terms of domain architecture, Sigma-54 factor interaction spans 219–448 (IIGNSKPMQE…LENVMERAVI (230 aa)). Residues 247-254 (GESGVGKE) and 310-319 (ADGGTIFLDE) contribute to the ATP site. The H-T-H motif DNA-binding region spans 501–520 (IGEAAKELGLARRMLGVRME).

Functionally, anfA is essential for nitrogen fixation under Mo- and V-deficient conditions. It is required for the regulation of nitrogenase 3 transcription. Interacts with sigma-54. The chain is Nitrogen fixation protein AnfA (anfA) from Azotobacter vinelandii.